The primary structure comprises 370 residues: Homospermidine synthase 2 (370 aa).

This sequence belongs to the deoxyhypusine synthase family. As to quaternary structure, homotetramer. NAD(+) serves as cofactor. In terms of processing, the N-terminus is blocked. In terms of tissue distribution, expressed in roots.

The catalysed reaction is putrescine + spermidine = sym-homospermidine + propane-1,3-diamine. Its pathway is alkaloid biosynthesis; pyrrolizidine alkaloid biosynthesis. Catalyzes the transfer of an aminobutyl unit from spermidine onto putrescine. The resulting polyamine homospermidine is a precursor in the biosynthesis of pyrrolizidine alkaloids. This is Homospermidine synthase 2 from Senecio vernalis (Spring groundsel).